The following is a 147-amino-acid chain: Hemoglobin subunit beta-2 (147 aa).

Valine 2 is subject to N-acetylvaline. The Globin domain maps to 3–147 (HLTDAEKATV…VASALAHKYH (145 aa)). Phosphoserine is present on serine 13. Lysine 18 bears the N6-succinyllysine mark. Serine 51 and serine 53 each carry phosphoserine. The heme b site is built by histidine 64 and histidine 93. Arginine 105 is modified (asymmetric dimethylarginine). Threonine 124 is subject to Phosphothreonine. At cysteine 126 the chain carries Phosphoserine; in variant Ser-126.

This sequence belongs to the globin family. In terms of assembly, heterotetramer of two alpha chains and two beta chains. As to expression, red blood cells.

In terms of biological role, involved in oxygen transport from the lung to the various peripheral tissues. This Rattus norvegicus (Rat) protein is Hemoglobin subunit beta-2.